We begin with the raw amino-acid sequence, 901 residues long: Probable inorganic carbon transporter subunit DabA (901 aa).

Positions 424, 426, 606, and 621 each coordinate Zn(2+).

This sequence belongs to the inorganic carbon transporter (TC 9.A.2) DabA family. As to quaternary structure, forms a complex with DabB. It depends on Zn(2+) as a cofactor.

It is found in the cell membrane. Functionally, part of an energy-coupled inorganic carbon pump. The polypeptide is Probable inorganic carbon transporter subunit DabA (Staphylococcus aureus (strain MSSA476)).